A 116-amino-acid chain; its full sequence is Large ribosomal subunit protein uL18 (116 aa).

It belongs to the universal ribosomal protein uL18 family. Part of the 50S ribosomal subunit; part of the 5S rRNA/L5/L18/L25 subcomplex. Contacts the 5S and 23S rRNAs.

Its function is as follows. This is one of the proteins that bind and probably mediate the attachment of the 5S RNA into the large ribosomal subunit, where it forms part of the central protuberance. This chain is Large ribosomal subunit protein uL18, found in Pseudomonas fluorescens (strain ATCC BAA-477 / NRRL B-23932 / Pf-5).